The sequence spans 460 residues: Bifunctional protein GlmU (460 aa).

A pyrophosphorylase region spans residues 1–229 (MTNYAIILAA…FNESLGVNDR (229 aa)). Residues 8 to 11 (LAAG), lysine 22, glutamine 72, and 77 to 78 (GT) contribute to the UDP-N-acetyl-alpha-D-glucosamine site. Position 102 (aspartate 102) interacts with Mg(2+). 4 residues coordinate UDP-N-acetyl-alpha-D-glucosamine: glycine 139, glutamate 154, asparagine 169, and asparagine 227. Asparagine 227 contributes to the Mg(2+) binding site. Positions 230-250 (VALATAETVMRQRITQKHMVN) are linker. The N-acetyltransferase stretch occupies residues 251–460 (GVTFHNPETV…RLAHHPSRSK (210 aa)). UDP-N-acetyl-alpha-D-glucosamine-binding residues include arginine 332 and lysine 350. Histidine 362 serves as the catalytic Proton acceptor. 2 residues coordinate UDP-N-acetyl-alpha-D-glucosamine: tyrosine 365 and asparagine 376. Residues alanine 379, 385-386 (NY), serine 404, alanine 422, and arginine 439 each bind acetyl-CoA.

This sequence in the N-terminal section; belongs to the N-acetylglucosamine-1-phosphate uridyltransferase family. It in the C-terminal section; belongs to the transferase hexapeptide repeat family. Homotrimer. Mg(2+) serves as cofactor.

It is found in the cytoplasm. The enzyme catalyses alpha-D-glucosamine 1-phosphate + acetyl-CoA = N-acetyl-alpha-D-glucosamine 1-phosphate + CoA + H(+). It carries out the reaction N-acetyl-alpha-D-glucosamine 1-phosphate + UTP + H(+) = UDP-N-acetyl-alpha-D-glucosamine + diphosphate. It participates in nucleotide-sugar biosynthesis; UDP-N-acetyl-alpha-D-glucosamine biosynthesis; N-acetyl-alpha-D-glucosamine 1-phosphate from alpha-D-glucosamine 6-phosphate (route II): step 2/2. It functions in the pathway nucleotide-sugar biosynthesis; UDP-N-acetyl-alpha-D-glucosamine biosynthesis; UDP-N-acetyl-alpha-D-glucosamine from N-acetyl-alpha-D-glucosamine 1-phosphate: step 1/1. The protein operates within bacterial outer membrane biogenesis; LPS lipid A biosynthesis. Functionally, catalyzes the last two sequential reactions in the de novo biosynthetic pathway for UDP-N-acetylglucosamine (UDP-GlcNAc). The C-terminal domain catalyzes the transfer of acetyl group from acetyl coenzyme A to glucosamine-1-phosphate (GlcN-1-P) to produce N-acetylglucosamine-1-phosphate (GlcNAc-1-P), which is converted into UDP-GlcNAc by the transfer of uridine 5-monophosphate (from uridine 5-triphosphate), a reaction catalyzed by the N-terminal domain. In Streptococcus pyogenes serotype M49 (strain NZ131), this protein is Bifunctional protein GlmU.